The following is a 2058-amino-acid chain: Protein Daple (2058 aa).

The 121-residue stretch at 11–131 (HFLESPLVTW…KILLLMLGCA (121 aa)) folds into the Calponin-homology (CH) domain. Coiled coils occupy residues 195–221 (HLKR…DYLQ), 247–428 (EDKK…SMNE), 455–1016 (ELNE…LRGA), 1043–1082 (ELLK…NLNL), and 1108–1388 (ANLQ…KFYD). 7 disordered regions span residues 1406 to 1444 (LIKP…MRPL), 1480 to 1592 (HRMS…EDMI), 1617 to 1655 (TKNR…PGSE), 1696 to 1724 (LHPS…LPSA), 1831 to 1857 (YSAT…RGNS), 1940 to 1959 (LALP…ASSL), and 1988 to 2051 (PVRP…PQTV). Positions 1409–1418 (PKKEPSRESV) are enriched in basic and acidic residues. Positions 1419–1429 (KSPTDVQSKTM) are enriched in polar residues. The segment covering 1494–1506 (GPEHLSRSRRMES) has biased composition (basic and acidic residues). The segment covering 1552 to 1577 (NAGSSRVPWTSSLEVSRSASNSSSPL) has biased composition (polar residues). Short sequence motifs (GBA) lie at residues 1653-1675 (GSEM…PSRR) and 1676-1697 (HSLN…ETLH). Over residues 1831–1841 (YSATSSSQSPE) the composition is skewed to polar residues. The span at 2039-2048 (PASPDPSADP) shows a compositional bias: low complexity. Residues 2055–2058 (YGCV) carry the PDZ-binding motif.

This sequence belongs to the CCDC88 family. As to quaternary structure, interacts with dvl2/dsh via the PDZ-binding motif. As to expression, expressed weakly in gastrulae, with slightly stronger expression in the dorsal region. In neurulae, expressed in the neural plate with strong expression in the presumptive mesencephalic region. At the tailbud stage, expressed in somatic cells and in part of the tail. Also strongly expressed in regions of the head including eye vesicles, otic vesicles, olfactory placode and the pharyngeal cavity.

The protein resides in the cytoplasm. Its subcellular location is the cell junction. Functionally, positive regulator of Wnt signaling, acting synergistically with dvl2/dsh. Functions upstream of ctnnb1/beta-catenin in the canonical Wnt pathway, and also activates jnk in the Wnt/planar cell polarity (PCP) pathway. Acts as a non-receptor guanine nucleotide exchange factor which binds to and activates guanine nucleotide-binding protein G(i) alpha subunits. This promotes apical cell constriction and subsequent bending of the neural plate during neurulation via arhgef18. This is Protein Daple (ccdc88c) from Xenopus laevis (African clawed frog).